The sequence spans 151 residues: Small ribosomal subunit protein uS15 (151 aa).

Residues 1–20 (MARLHSGKRGSSGSTRPLRT) form a disordered region.

Belongs to the universal ribosomal protein uS15 family. Part of the 30S ribosomal subunit.

In Methanococcus maripaludis (strain C5 / ATCC BAA-1333), this protein is Small ribosomal subunit protein uS15.